Here is a 347-residue protein sequence, read N- to C-terminus: NADH-quinone oxidoreductase subunit H (347 aa).

The next 9 membrane-spanning stretches (helical) occupy residues 13-33 (LIIA…VAYL), 50-70 (PNVV…KFVF), 82-102 (GVFL…WAVI), 115-135 (VGIL…IMGG), 161-181 (IGFV…TDIV), 198-218 (FLDW…ISAL), 248-268 (FLLF…LMTV), 286-306 (VPGI…FAMV), and 325-345 (VFLP…KVFG).

The protein belongs to the complex I subunit 1 family. NDH-1 is composed of 14 different subunits. Subunits NuoA, H, J, K, L, M, N constitute the membrane sector of the complex.

It is found in the cell inner membrane. The catalysed reaction is a quinone + NADH + 5 H(+)(in) = a quinol + NAD(+) + 4 H(+)(out). NDH-1 shuttles electrons from NADH, via FMN and iron-sulfur (Fe-S) centers, to quinones in the respiratory chain. The immediate electron acceptor for the enzyme in this species is believed to be ubiquinone. Couples the redox reaction to proton translocation (for every two electrons transferred, four hydrogen ions are translocated across the cytoplasmic membrane), and thus conserves the redox energy in a proton gradient. This subunit may bind ubiquinone. The sequence is that of NADH-quinone oxidoreductase subunit H from Brucella abortus (strain 2308).